We begin with the raw amino-acid sequence, 378 residues long: Transcription factor YY2 (378 aa).

Residues 39–113 (LETSVGQTIE…DNLLFSPEFG (75 aa)) form a mediates transcriptional activation region. Residues 243-378 (EFTSMRPKKP…LTHVKNKNDQ (136 aa)) are mediates transcriptional repression. 4 consecutive C2H2-type zinc fingers follow at residues 260–284 (IACS…LHIH), 289–311 (HVCA…QLVH), 317–341 (YQCT…VRIH), and 347–371 (FVCP…ILTH).

This sequence belongs to the YY transcription factor family. In terms of tissue distribution, weakly expressed by neuronal and glial cells in the cerebral cortex. Expressed by Purkinje cells and in the granular layers of the cerebellum. Expressed in all layers of spermatocytes in testis but not detected in sperm cells.

It is found in the nucleus. Functionally, functions as a multifunctional transcription factor that may exhibit positive and negative control on a large number of genes. May antagonize YY1 and function in development and differentiation. The protein is Transcription factor YY2 (Yy2) of Mus musculus (Mouse).